Consider the following 156-residue polypeptide: uncharacterized protein (156 aa).

Residues L43–L84 adopt a coiled-coil conformation.

This is an uncharacterized protein from Aquifex aeolicus (strain VF5).